The sequence spans 816 residues: Two pore channel protein 1 (816 aa).

Residues 1-112 are Cytoplasmic-facing; that stretch reads MAVSLDDDVP…AHNHLFYLME (112 aa). A disordered region spans residues 17–64; it reads EGGSAPLAPSNGLGQEELPSKNGGSYAIHDSQAPSLSSGGESSPSSPA. Positions 50 to 63 are enriched in low complexity; it reads PSLSSGGESSPSSP. Residues 113–133 traverse the membrane as a helical segment; the sequence is LATALLLLLLSLCEAPAVPAL. Residue arginine 134 is a topological domain, extracellular. A helical transmembrane segment spans residues 135-155; that stretch reads LGIYVHATLELFALMVVVFEL. The Cytoplasmic segment spans residues 156-177; sequence CMKLRWLGLHTFIRHKRTMVKT. The helical transmembrane segment at 178–198 threads the bilayer; it reads SVLVVQFVEAIVVLVRQMSHV. Topologically, residues 199-200 are extracellular; the sequence is RV. The helical transmembrane segment at 201–220 threads the bilayer; sequence TRALRCIFLVDCRYCGGVRR. Over 221–234 the chain is Cytoplasmic; it reads NLRQIFQSLPPFMD. Residues 235 to 255 form a helical membrane-spanning segment; it reads ILLLLLFFMIIFAILGFYLFS. Topologically, residues 256–262 are extracellular; sequence PNPSDPY. The segment at residues 263 to 286 is an intramembrane region (helical; Pore-forming); sequence FSTLENSIVSLFVLLTTANFPDVM. Residues 287–294 are Extracellular-facing; the sequence is MPSYSRNP. The helical transmembrane segment at 295 to 315 threads the bilayer; sequence WSCVFFIVYLSIELYFIMNLL. Residues 316–444 lie on the Cytoplasmic side of the membrane; sequence LAVVFDTFND…NILVKSKAFQ (129 aa). A helical membrane pass occupies residues 445–465; the sequence is YFMYLVVAVNGVWILVETFML. Residues 466 to 479 are Extracellular-facing; sequence KGGNFFSKHVPWSY. The chain crosses the membrane as a helical span at residues 480–500; that stretch reads LVFLTIYGVELFLKVAGLGPV. Topologically, residues 501–503 are cytoplasmic; it reads EYL. A helical membrane pass occupies residues 504 to 526; that stretch reads SSGWNLFDFSVTVFAFLGLLALA. Residues 527–534 lie on the Extracellular side of the membrane; it reads LNMEPFYF. Residues 535–549 form a helical membrane-spanning segment; sequence IVVLRPLQLLRLFKL. The Cytoplasmic portion of the chain corresponds to 550–573; that stretch reads KERYRNVLDTMFELLPRMASLGLT. Residues 574–594 form a helical membrane-spanning segment; the sequence is LLIFYYSFAIVGMEFFCGIVF. Topologically, residues 595-629 are extracellular; the sequence is PNCCNTSTVADAYRWRNHTVGNRTVVEEGYYYLNN. N-linked (GlcNAc...) asparagine glycans are attached at residues asparagine 599, asparagine 611, and asparagine 616. Residues 630 to 653 constitute an intramembrane region (helical; Pore-forming); the sequence is FDNILNSFVTLFELTVVNNWYIIM. The Extracellular segment spans residues 654 to 670; sequence EGVTSQTSHWSRLYFMT. A helical membrane pass occupies residues 671 to 691; that stretch reads FYIVTMVVMTIIVAFILEAFV. At 692–816 the chain is on the cytoplasmic side; it reads FRMNYSRKNQ…GSRQRSQTVT (125 aa). Residues 769–796 are a coiled coil; that stretch reads SLKMYQEEIQEWYEEHAREQEQQRQLSS. The interval 782-816 is disordered; the sequence is EEHAREQEQQRQLSSSAAPAAQQPPGSRQRSQTVT. A compositionally biased stretch (low complexity) spans 791–816; sequence QRQLSSSAAPAAQQPPGSRQRSQTVT.

It belongs to the calcium channel alpha-1 subunit (TC 1.A.1.11) family. Two pore calcium channel subfamily. As to quaternary structure, dimer. Interacts with MTOR; the interaction is required for TPCN1 ATP sensitivity. Interacts with STX7, STX8 and STX12. Interacts with JPT2. Found in a complex with LSM12, TPCN1 and TPCN2. Post-translationally, N-glycosylated. Highest expression found in the heart and kidney, and lowest expression found in the spleen.

It localises to the lysosome membrane. The protein resides in the endosome membrane. It is found in the early endosome membrane. Its subcellular location is the recycling endosome membrane. It carries out the reaction Na(+)(in) = Na(+)(out). The catalysed reaction is Ca(2+)(in) = Ca(2+)(out). Na(+) current is inhibited by ATP in a MTORC-dependent manner. ATP sensitivity is independent of PI(3,5)P2. Probably regulated by Mg(2+) ions, cytosolic Mg(2+) selectively inhibits outward current while lysosomal Mg(2+) modestly inhibits both the outward and inward currents. In the absence of Mg(2+), NAADP readily activates TPCN2, with properties similar to PI(3,5)P2. Both current elicited by PI(3,5)P2 as well as NAADP are inhibited by tetrandrine. Its function is as follows. Intracellular channel initially characterized as a non-selective Ca(2+)-permeable channel activated by NAADP (nicotinic acid adenine dinucleotide phosphate), it is also a voltage-gated highly-selective Na(+) channel activated directly by PI(3,5)P2 (phosphatidylinositol 3,5-bisphosphate) that senses pH changes and confers electrical excitability to organelles. Localizes to the early and recycling endosomes membranes where it plays a role in the uptake and processing of proteins and regulates organellar membrane excitability, membrane trafficking and pH homeostasis. Ion selectivity is not fixed but rather agonist-dependent and under defined ionic conditions, can be readily activated by both NAADP and PI(3,5)P2. Required for mTOR-dependent nutrient sensing. (Microbial infection) During Ebola virus (EBOV) infection, controls the movement of endosomes containing virus particles and is required by EBOV to escape from the endosomal network into the cell cytoplasm. This chain is Two pore channel protein 1, found in Homo sapiens (Human).